The sequence spans 580 residues: Mucolipin-1 (580 aa).

The interval 1–38 (MTDPAGPRGSETERLLTPNPGYGTQVGPSPAPPTPPEE) is disordered. At 1–65 (MTDPAGPRGS…FRAKGRKPCK (65 aa)) the chain is on the cytoplasmic side. At S10 the chain carries Phosphoserine. The short motif at 11 to 16 (ETERLL) is the Dileucine motif; mediates targeting to lysosomes element. The interval 42 to 62 (RRRLKYFFMSPCDKFRAKGRK) is interaction with phosphoinositides. A helical transmembrane segment spans residues 66–86 (LMLQVVKILVVTVQLILFGLS). The Extracellular portion of the chain corresponds to 87–298 (NQLAVTFREE…VFRHGDNSFR (212 aa)). The extracellular/lumenal pore loop stretch occupies residues 107 to 121 (LGYSDGADDTFAAYT). An intrachain disulfide couples C166 to C192. The N-linked (GlcNAc...) asparagine glycan is linked to N230. C253 and C284 are oxidised to a cystine. A helical transmembrane segment spans residues 299–321 (LLFDVVVILTCSLSFLLCARSLL). Residues 322–350 (RGFLLQNEFVRFMWRQRRRVISLWERLEF) are Cytoplasmic-facing. A helical membrane pass occupies residues 351-371 (VNGWYILLVTSDVLTISGTIM). Residues 372–382 (KIGIEAKNLAS) are Extracellular-facing. A helical transmembrane segment spans residues 383–405 (YDVCSILLGTSTLLVWVGVIRYL). Residues 406–427 (TFFHNYNILIATLRVALPSVMR) lie on the Cytoplasmic side of the membrane. The helical transmembrane segment at 428 to 448 (FCCCVAVIYLGYCFCGWIVLG) threads the bilayer. Residues 449–456 (PYHVKFRS) lie on the Extracellular side of the membrane. Residues 457-477 (LSMVSECLFSLINGDDMFVTF) constitute an intramembrane region (pore-forming). The Selectivity filter signature appears at 469 to 474 (NGDDMF). At 478–491 (AAMQAQQGRSSLVW) the chain is on the extracellular side. Residues 492 to 513 (LFSQLYLYSFISLFIYMVLSLF) traverse the membrane as a helical segment. At 514-580 (IALITGAYDT…PSEEHSLLVN (67 aa)) the chain is on the cytoplasmic side. Phosphoserine; by PAK is present on residues S557 and S559. Residues 565-567 (CCC) form a required for palmitoylation and association with membranes region. A Dileucine internalization motif; mediates AP2 complex-dependent internalization motif is present at residues 573-578 (EEHSLL).

This sequence belongs to the transient receptor (TC 1.A.4) family. Polycystin subfamily. MCOLN1 sub-subfamily. Homotetramer. Homooligomer. Can heterooligomerize with MCOLN2 or MCOLN3; heteromeric assemblies have different channel properties as compared to the respective homooligomers and may be tissue-specific. Interacts with PDCD6. Interacts with TMEM163. Interacts with LAPTM4B. Post-translationally, palmitoylated; involved in association with membranes. In terms of processing, phosphorylation by PKA inhibits channel activity. Dephosphorylation increases activity. Proteolytically cleaved probably involving multiple lysosomal proteases including cathepsin B; inhibits lysosomal channel activity.

The protein resides in the late endosome membrane. The protein localises to the lysosome membrane. Its subcellular location is the cytoplasmic vesicle membrane. It localises to the cell projection. It is found in the phagocytic cup. The protein resides in the cytoplasmic vesicle. The protein localises to the phagosome membrane. Its subcellular location is the cell membrane. The enzyme catalyses Ca(2+)(in) = Ca(2+)(out). The catalysed reaction is Fe(2+)(in) = Fe(2+)(out). It catalyses the reaction Mg(2+)(in) = Mg(2+)(out). It carries out the reaction K(+)(in) = K(+)(out). The enzyme catalyses Na(+)(in) = Na(+)(out). Its activity is regulated as follows. Channel activity is controlled by multiple regulatory mechanisms in different subcellular compartments. Channel function is transiently modulated by changes in Ca(2+) in a pH-dependent manner; pH changes modify the aggregation state of unitary channels; a negative cooperativity between extracellular/lumenal Ca(2+) and H(+) is suggested. Regulated by phosphoinositides in a compartment-specific manner: in lysosomes activated by PtdIns(3,5)P2 (Phosphatidylinositol 3,5-bisphosphate) and at the plasma membrane inhibited by PtdIns(4,5)P2 (Phosphatidylinositol 4,5-bisphosphate). Functionally, nonselective cation channel probably playing a role in the regulation of membrane trafficking events and of metal homeostasis. Acts as a Ca(2+)-permeable cation channel with inwardly rectifying activity. Proposed to play a major role in Ca(2+) release from late endosome and lysosome vesicles to the cytoplasm, which is important for many lysosome-dependent cellular events, including the fusion and trafficking of these organelles, exocytosis and autophagy. Required for efficient uptake of large particles in macrophages in which Ca(2+) release from the lysosomes triggers lysosomal exocytosis. May also play a role in phagosome-lysosome fusion. Involved in lactosylceramide trafficking indicative for a role in the regulation of late endocytic membrane fusion/fission events. By mediating lysosomal Ca(2+) release is involved in regulation of mTORC1 signaling and in mTOR/TFEB-dependent lysosomal adaptation to environmental cues such as nutrient levels. Seems to act as lysosomal active oxygen species (ROS) sensor involved in ROS-induced TFEB activation and autophagy. Also functions as a Fe(2+) permeable channel in late endosomes and lysosomes. Also permeable to Mg(2+), Na(+). K(+) and Cs(+). Proposed to play a role in zinc homeostasis probably implicating its association with TMEM163. In adaptive immunity, TRPML2 and TRPML1 may play redundant roles in the function of the specialized lysosomes of B cells. In terms of biological role, may contribute to cellular lipase activity within the late endosomal pathway or at the cell surface which may be involved in processes of membrane reshaping and vesiculation, especially the growth of tubular structures. However, it is not known, whether it conveys the enzymatic activity directly, or merely facilitates the activity of an associated phospholipase. This Macaca fascicularis (Crab-eating macaque) protein is Mucolipin-1 (MCOLN1).